Reading from the N-terminus, the 257-residue chain is Imidazole glycerol phosphate synthase subunit HisF (257 aa).

Residues aspartate 12 and aspartate 131 contribute to the active site.

It belongs to the HisA/HisF family. Heterodimer of HisH and HisF.

The protein resides in the cytoplasm. The enzyme catalyses 5-[(5-phospho-1-deoxy-D-ribulos-1-ylimino)methylamino]-1-(5-phospho-beta-D-ribosyl)imidazole-4-carboxamide + L-glutamine = D-erythro-1-(imidazol-4-yl)glycerol 3-phosphate + 5-amino-1-(5-phospho-beta-D-ribosyl)imidazole-4-carboxamide + L-glutamate + H(+). Its pathway is amino-acid biosynthesis; L-histidine biosynthesis; L-histidine from 5-phospho-alpha-D-ribose 1-diphosphate: step 5/9. In terms of biological role, IGPS catalyzes the conversion of PRFAR and glutamine to IGP, AICAR and glutamate. The HisF subunit catalyzes the cyclization activity that produces IGP and AICAR from PRFAR using the ammonia provided by the HisH subunit. This Mycobacteroides abscessus (strain ATCC 19977 / DSM 44196 / CCUG 20993 / CIP 104536 / JCM 13569 / NCTC 13031 / TMC 1543 / L948) (Mycobacterium abscessus) protein is Imidazole glycerol phosphate synthase subunit HisF.